We begin with the raw amino-acid sequence, 335 residues long: Pyruvate dehydrogenase E1 component subunit beta (335 aa).

Glutamate 60 contacts thiamine diphosphate. Alanine 161, isoleucine 162, and asparagine 166 together coordinate K(+).

In terms of assembly, heterodimer of an alpha and a beta chain. Thiamine diphosphate is required as a cofactor.

It is found in the plastid. The protein localises to the chloroplast. The enzyme catalyses N(6)-[(R)-lipoyl]-L-lysyl-[protein] + pyruvate + H(+) = N(6)-[(R)-S(8)-acetyldihydrolipoyl]-L-lysyl-[protein] + CO2. In terms of biological role, the pyruvate dehydrogenase complex catalyzes the overall conversion of pyruvate to acetyl-CoA and CO(2). It contains multiple copies of three enzymatic components: pyruvate dehydrogenase (E1), dihydrolipoamide acetyltransferase (E2) and lipoamide dehydrogenase (E3). In Chlorokybus atmophyticus (Soil alga), this protein is Pyruvate dehydrogenase E1 component subunit beta (pdhB).